We begin with the raw amino-acid sequence, 184 residues long: Ribosome-recycling factor (184 aa).

The protein belongs to the RRF family.

The protein resides in the cytoplasm. Functionally, responsible for the release of ribosomes from messenger RNA at the termination of protein biosynthesis. May increase the efficiency of translation by recycling ribosomes from one round of translation to another. The chain is Ribosome-recycling factor from Psychrobacter sp. (strain PRwf-1).